Consider the following 616-residue polypeptide: Chaperone protein DnaK (616 aa).

Position 174 is a phosphothreonine; by autocatalysis (T174). A disordered region spans residues Q575–K616. Residues A607 to K616 are compositionally biased toward basic and acidic residues.

Belongs to the heat shock protein 70 family.

Acts as a chaperone. The sequence is that of Chaperone protein DnaK from Ruminiclostridium cellulolyticum (strain ATCC 35319 / DSM 5812 / JCM 6584 / H10) (Clostridium cellulolyticum).